We begin with the raw amino-acid sequence, 615 residues long: DNA mismatch repair protein MutL (615 aa).

Positions 363-397 (FAEPAVREPVAPRYTPAPASGSRPAAPWPNAQPGY) are disordered. Residues 378–391 (PAPASGSRPAAPWP) are compositionally biased toward low complexity.

Belongs to the DNA mismatch repair MutL/HexB family.

This protein is involved in the repair of mismatches in DNA. It is required for dam-dependent methyl-directed DNA mismatch repair. May act as a 'molecular matchmaker', a protein that promotes the formation of a stable complex between two or more DNA-binding proteins in an ATP-dependent manner without itself being part of a final effector complex. This chain is DNA mismatch repair protein MutL, found in Escherichia coli O157:H7 (strain EC4115 / EHEC).